The chain runs to 595 residues: P2X purinoceptor 7 (595 aa).

The Cytoplasmic portion of the chain corresponds to 1 to 22 (MPACCSWNDVLQYETNKVTRIQ). Cys-4 is lipidated: S-palmitoyl cysteine. A helical transmembrane segment spans residues 23–46 (STNYGTVKWVLHMIVFSYISFALV). Over 47–328 (SDKLYQRKEP…ILVFGTGGKF (282 aa)) the chain is Extracellular. N-linked (GlcNAc...) asparagine glycosylation occurs at Asn-74. 3 cysteine pairs are disulfide-bonded: Cys-119–Cys-168, Cys-129–Cys-152, and Cys-135–Cys-162. ADP-ribosylarginine; by ART2B is present on residues Arg-125 and Arg-133. An N-linked (GlcNAc...) asparagine glycan is attached at Asn-187. ATP is bound at residue Thr-189. N-linked (GlcNAc...) asparagine glycans are attached at residues Asn-202 and Asn-213. Cysteines 216 and 226 form a disulfide. Asn-241 carries N-linked (GlcNAc...) asparagine glycosylation. Cys-260 and Cys-269 are oxidised to a cystine. Arg-294 and Lys-311 together coordinate ATP. A helical membrane pass occupies residues 329-353 (DIIQLVVYIGSTLSYFGLATVCIDL). Residue Ser-342 participates in Na(+) binding. Residues 354-595 (LINTYSSAFC…GQYSGFKYPY (242 aa)) lie on the Cytoplasmic side of the membrane. Positions 360–377 (SAFCRSGVYPYCKCCEPC) are C-cys anchor. S-palmitoyl cysteine attachment occurs at residues Cys-363, Cys-374, and Cys-377. Residue Ser-390 is modified to Phosphoserine. Positions 395-595 (KPTLKYVSFV…GQYSGFKYPY (201 aa)) are cytoplasmic ballast. Residues Cys-479, Cys-499, and Cys-506 each contribute to the Zn(2+) site. Positions 546, 547, 550, and 567 each coordinate GTP. Zn(2+) is bound at residue Cys-572. Lys-583, Ser-589, and Gly-590 together coordinate GTP.

The protein belongs to the P2X receptor family. In terms of assembly, homotrimers. Interacts with LAMA3, ITGB2, ACTB, ACTN4, SVIL, MPP3, HSPA1, HSPCB, HSPA8, PIK230 and PTPRB. Interacts (via C-terminus) with EMP2. Post-translationally, phosphorylation results in its inactivation. In terms of processing, ADP-ribosylation at Arg-125 is necessary and sufficient to activate P2RX7 and gate the channel. Palmitoylation of several cysteines in the C-terminal cytoplasmic tail is required for efficient localization to cell surface. Palmitoylation prevents channel desensitization by physically anchoring the palmitoylated groups to the membrane.

The protein resides in the cell membrane. The enzyme catalyses Ca(2+)(in) = Ca(2+)(out). It carries out the reaction K(+)(in) = K(+)(out). It catalyses the reaction Na(+)(in) = Na(+)(out). Activated by high extracellular ATP levels (0.1-2.5 mM). The synthetic analog 2'(3')-O-(4-benzoylbenzoyl)ATP (BzATP) acts as a potent agonist. Does not undergo desensitization, instead, undergoes a facilitation process where currents progressively increase with repetitive or prolonged agonist application. Palmitoylation prevents channel desensitization. The permeability of the P2RX7 channel is modulated by the amount of cholesterol in the plasma membrane. In terms of biological role, ATP-gated nonselective transmembrane cation channel. Requires high millimolar-range concentrations of ATP to become activated. ATP binding trigers the rapid opening of the channel and allows Na(+) and Ca(2+) influx and K(+) efflux. Has also the ability to form a large pore in the cell membrane, allowing the passage of large cationic molecules. In microglia, may mediate NADPH transport across the plasma membrane. In immune cells, P2RX7 acts as a molecular sensor in pathological inflammatory states by detecting and responding to high local concentrations of extracellar ATP. In microglial cells, P2RX7 activation leads to the release of pro-inflammatory cytokines, such as IL-1beta and IL-18, through the activation of the NLRP3 inflammasome and caspase-1. Cooperates with KCNK6 to activate NLRP3 inflammasome. Activates death pathways leading to apoptosis and autophagy. Activates death pathways leading to pyroptosis. This is P2X purinoceptor 7 (P2rx7) from Mus musculus (Mouse).